The chain runs to 459 residues: MRTELANKVVSVETEKRLSLKEKMSYGFGDFGNGFMFDLGQIYLLKYFTDVAGIPAAMAGGIFLVSKLFAAITDPIVGSSIDYRKNIGKRGKFRPYLLIGSIVLAVLTVLIFLSPNVSTTGKLIYAYASYMIWGIGYSFVNIPYGSLGAAMTQNSEDRTSISTFRQIGSLGALFITSVAVMPLLVKFDNPKVGYPVVMGLFAALGVFWFYICYRNCKERIIISEAPKEKLTLSSVVKTFITNKPLLTLVLMTIFSISAYNIKSAMLVYFAQYNLGNVELMAYMNFIIIGSSFLGVVFLPKLVKMFGKKRTAMIGFGISVAADLINFMLPSNVYVFTILASIAFIGISIPNGITWALVSDIIDYGEWKSGERKEATTYSLFNFSRKLAQSLSGFLSGIGLGIIGYVPNAVQTAQALIGIKALLLLYPAIALALAMFIIGFLYKLTDQQHAQIVQDLHQKS.

The next 12 helical transmembrane spans lie at 25–45 (SYGF…IYLL), 52–72 (AGIP…FAAI), 95–115 (PYLL…FLSP), 123–143 (LIYA…VNIP), 167–187 (IGSL…LVKF), 192–212 (VGYP…FYIC), 249–269 (VLMT…LVYF), 279–299 (LMAY…VFLP), 310–330 (TAMI…MLPS), 332–352 (VYVF…PNGI), 389–409 (SLSG…PNAV), and 420–440 (ALLL…IGFL).

The protein belongs to the sodium:galactoside symporter (TC 2.A.2) family.

The protein localises to the cell membrane. This is an uncharacterized protein from Bacillus subtilis (strain 168).